A 127-amino-acid polypeptide reads, in one-letter code: UPF0166 protein PYRAB06660 (127 aa).

Belongs to the UPF0166 family.

This chain is UPF0166 protein PYRAB06660, found in Pyrococcus abyssi (strain GE5 / Orsay).